The following is a 913-amino-acid chain: Transient receptor potential cation channel protein painless (913 aa).

At 1–490 (MDFNNCGFID…SSFLFLKWHR (490 aa)) the chain is on the cytoplasmic side. ANK repeat units follow at residues 154–189 (GEFT…DIDS), 260–289 (EYFG…DINS), and 368–397 (GRLV…YIGS). A helical membrane pass occupies residues 491-511 (LSVIFYLNFLIYSLFTASIIT). At 512-523 (YTLLKFHESDQR) the chain is on the extracellular side. Residues 524-544 (ALTAFFGLLSWLGISYLILRE) form a helical membrane-spanning segment. At 545 to 555 (CIQWIMSPVRY) the chain is on the cytoplasmic side. A helical transmembrane segment spans residues 556–576 (FWSITNIMEVALITLSIFTCM). The Extracellular segment spans residues 577–586 (ESSFDKETQR). The helical transmembrane segment at 587–607 (VLAVFTILLVSMEFCLLVGSL) threads the bilayer. Topologically, residues 608–628 (PVLSISTHMLMLREVSNSFLK) are cytoplasmic. A helical transmembrane segment spans residues 629–649 (SFTLYSIFVLTFSLCFYILFG). Residues 650–708 (KSVEEDQSKSATPCPPLGKKEGKDEEQGFNTFTKPIEAVIKTIVMLTGEFDAGSIQFTS) are Extracellular-facing. The interval 656–675 (QSKSATPCPPLGKKEGKDEE) is disordered. The helical transmembrane segment at 709 to 729 (IYTYLIFLLFVIFMTIVLFNL) threads the bilayer. Residues 730-913 (LNGLAVSDTQ…QLIQLVQDRK (184 aa)) are Cytoplasmic-facing.

It belongs to the transient receptor (TC 1.A.4) family. Present in multidendritic neurons, chordotonal neurons, a subset of cells in the central nervous system and a subset of sensory neurons in the antennal-maxillary complex. Not detected in gonads and dorsal vessels (at protein level). Expressed in peripheral neurons that extend multiple branched dendrites beneath the larval epidermis, similar to vertebrate pain receptors.

The protein localises to the membrane. Its function is as follows. Receptor-activated non-selective cation channel involved in detection of pain sensation due to high temperature. Involved in heat nociception by being activated by noxious temperature of 38 degrees Celsius. The chain is Transient receptor potential cation channel protein painless (pain) from Drosophila melanogaster (Fruit fly).